Here is a 232-residue protein sequence, read N- to C-terminus: Movement and silencing protein TGBp1 (232 aa).

Residues 1 to 117 (MDVLINKLAS…GPGIVADFVC (117 aa)) form the (+)RNA virus helicase ATP-binding domain. Positions 118–232 (NKTKRFGSST…ACPDATFAPS (115 aa)) constitute a (+)RNA virus helicase C-terminal domain.

The protein belongs to the Tymovirales TGBp1 protein family. Homodimer and homooligomer. Interacts with capsid protein. Interacts with host AGO1; this interaction targets the host protein for degradation, thereby suppressing the antiviral RNA silencing.

It is found in the host cytoplasm. Its function is as follows. Transports viral genome to neighboring plant cells directly through plasmosdesmata, without any budding. The movement protein allows efficient cell to cell propagation, by bypassing the host cell wall barrier. Increases plasmodesma size exclusion limit. Acts as a suppressor of RNA-mediated gene silencing, also known as post-transcriptional gene silencing (PTGS), a mechanism of plant viral defense that limits the accumulation of viral RNAs. The protein is Movement and silencing protein TGBp1 of Populus balsamifera (Balsam poplar).